A 558-amino-acid polypeptide reads, in one-letter code: DNA ligase B (558 aa).

The active-site N6-AMP-lysine intermediate is lysine 124.

Belongs to the NAD-dependent DNA ligase family. LigB subfamily.

The enzyme catalyses NAD(+) + (deoxyribonucleotide)n-3'-hydroxyl + 5'-phospho-(deoxyribonucleotide)m = (deoxyribonucleotide)n+m + AMP + beta-nicotinamide D-nucleotide.. Functionally, catalyzes the formation of phosphodiester linkages between 5'-phosphoryl and 3'-hydroxyl groups in double-stranded DNA using NAD as a coenzyme and as the energy source for the reaction. The protein is DNA ligase B of Klebsiella pneumoniae (strain 342).